Reading from the N-terminus, the 621-residue chain is Putative DNA 3'-5' helicase Rad25 (621 aa).

In terms of domain architecture, Helicase ATP-binding spans 268 to 417; the sequence is VERFTEQGSG…EIFTLIGPPI (150 aa). 281–288 lines the ATP pocket; it reads GPPGSGKT. Residues 371–374 carry the DEAH box motif; that stretch reads DEVH. Residues 441–465 form a disordered region; that stretch reads PWGDETEQSEYSSTSGHDRRQAAAS. Residues 469-621 form the Helicase C-terminal domain; sequence KIDEIRYALA…EAVEPPAKTE (153 aa).

It belongs to the helicase family. RAD25/XPB subfamily.

The enzyme catalyses Couples ATP hydrolysis with the unwinding of duplex DNA by translocating in the 3'-5' direction.. It catalyses the reaction ATP + H2O = ADP + phosphate + H(+). The sequence is that of Putative DNA 3'-5' helicase Rad25 from Haloarcula marismortui (strain ATCC 43049 / DSM 3752 / JCM 8966 / VKM B-1809) (Halobacterium marismortui).